The sequence spans 332 residues: L-lactate dehydrogenase A chain (332 aa).

Residues 29 to 57 and arginine 99 contribute to the NAD(+) site; that span reads GMVGMASAISILLKDLCDELALVDVMEDK. The substrate site is built by arginine 106, asparagine 138, and arginine 169. Residue asparagine 138 coordinates NAD(+). Histidine 193 (proton acceptor) is an active-site residue. Threonine 248 contributes to the substrate binding site.

The protein belongs to the LDH/MDH superfamily. LDH family. In terms of assembly, homotetramer.

Its subcellular location is the cytoplasm. The catalysed reaction is (S)-lactate + NAD(+) = pyruvate + NADH + H(+). It functions in the pathway fermentation; pyruvate fermentation to lactate; (S)-lactate from pyruvate: step 1/1. Interconverts simultaneously and stereospecifically pyruvate and lactate with concomitant interconversion of NADH and NAD(+). The polypeptide is L-lactate dehydrogenase A chain (ldha) (Gillichthys seta (Shortjaw mudsucker)).